The chain runs to 52 residues: Ornatin-B (52 aa).

Residues 42–44 (RGD) carry the Cell attachment site motif.

The protein belongs to the ornatin family.

It is found in the secreted. Functionally, potent inhibitor of fibrinogen interaction with platelet receptors expressed on glycoprotein IIb-IIIa complex. May prevent blood from clotting during either feeding and/or storage of ingested blood. In Placobdella ornata (Turtle leech), this protein is Ornatin-B.